We begin with the raw amino-acid sequence, 264 residues long: COP9 signalosome complex subunit 7b (264 aa).

A2 carries the post-translational modification N-acetylalanine. The PCI domain occupies 2–159 (AGEQKPSSNL…QLLEVDFCIG (158 aa)). Residues 194-237 (RANQYKENHSRTQQQVEAEVTNIKKTLKATASSSAQEMEQQLAE) are a coiled coil. The span at 223-232 (TASSSAQEME) shows a compositional bias: polar residues. The interval 223-264 (TASSSAQEMEQQLAERECPPHAEQRQPTKKMSKVKGLVSSRH) is disordered. Basic and acidic residues predominate over residues 235–248 (LAERECPPHAEQRQ).

Belongs to the CSN7/EIF3M family. CSN7 subfamily. In terms of assembly, component of the CSN complex, composed of COPS1/GPS1, COPS2, COPS3, COPS4, COPS5, COPS6, COPS7 (COPS7A or COPS7B), COPS8 and COPS9. In the complex, it probably interacts directly with COPS1, COPS2, COPS4, COPS5, COPS6 and COPS8. Interacts with EIF3S6.

The protein resides in the cytoplasm. The protein localises to the nucleus. Its function is as follows. Component of the COP9 signalosome complex (CSN), a complex involved in various cellular and developmental processes. The CSN complex is an essential regulator of the ubiquitin (Ubl) conjugation pathway by mediating the deneddylation of the cullin subunits of SCF-type E3 ligase complexes, leading to decrease the Ubl ligase activity of SCF-type complexes such as SCF, CSA or DDB2. The complex is also involved in phosphorylation of p53/TP53, JUN, I-kappa-B-alpha/NFKBIA, ITPK1 and IRF8/ICSBP, possibly via its association with CK2 and PKD kinases. CSN-dependent phosphorylation of TP53 and JUN promotes and protects degradation by the Ubl system, respectively. This chain is COP9 signalosome complex subunit 7b (COPS7B), found in Bos taurus (Bovine).